The following is a 441-amino-acid chain: UPF0761 membrane protein RSc1559 (441 aa).

6 helical membrane passes run 44–64 (VLSL…FPMF), 101–121 (GLTA…MLTV), 141–161 (VLVF…SLSV), 182–202 (VVVG…LYVF), 207–227 (LVAW…FEIA), and 248–268 (FAAL…TLLG).

The protein belongs to the UPF0761 family.

It is found in the cell inner membrane. This is UPF0761 membrane protein RSc1559 from Ralstonia nicotianae (strain ATCC BAA-1114 / GMI1000) (Ralstonia solanacearum).